A 77-amino-acid polypeptide reads, in one-letter code: Translational regulator CsrA (77 aa).

The interval 58–77 (ANRRTAEETLDQASRLLSQK) is disordered. The span at 68–77 (DQASRLLSQK) shows a compositional bias: polar residues.

Belongs to the CsrA/RsmA family. As to quaternary structure, homodimer; the beta-strands of each monomer intercalate to form a hydrophobic core, while the alpha-helices form wings that extend away from the core.

It localises to the cytoplasm. A translational regulator that binds mRNA to regulate translation initiation and/or mRNA stability. Usually binds in the 5'-UTR at or near the Shine-Dalgarno sequence preventing ribosome-binding, thus repressing translation. Its main target seems to be the major flagellin gene, while its function is anatagonized by FliW. The polypeptide is Translational regulator CsrA (Magnetococcus marinus (strain ATCC BAA-1437 / JCM 17883 / MC-1)).